The chain runs to 208 residues: NADH-ubiquinone oxidoreductase chain 4 (208 aa).

6 helical membrane passes run 23–43 (VWIN…NLLW), 60–80 (PLSA…LLAS), 93–113 (KLYI…FSAN), 114–134 (ELIM…IIIT), 147–167 (IYFL…LIYI), and 185–205 (PINQ…AFMV).

It belongs to the complex I subunit 4 family. Core subunit of respiratory chain NADH dehydrogenase (Complex I) which is composed of 45 different subunits.

It is found in the mitochondrion inner membrane. It carries out the reaction a ubiquinone + NADH + 5 H(+)(in) = a ubiquinol + NAD(+) + 4 H(+)(out). Functionally, core subunit of the mitochondrial membrane respiratory chain NADH dehydrogenase (Complex I) which catalyzes electron transfer from NADH through the respiratory chain, using ubiquinone as an electron acceptor. Essential for the catalytic activity and assembly of complex I. The chain is NADH-ubiquinone oxidoreductase chain 4 (MT-ND4) from Microtus pennsylvanicus (Meadow vole).